A 337-amino-acid polypeptide reads, in one-letter code: Heat-inducible transcription repressor HrcA (337 aa).

Belongs to the HrcA family.

Negative regulator of class I heat shock genes (grpE-dnaK-dnaJ and groELS operons). Prevents heat-shock induction of these operons. This chain is Heat-inducible transcription repressor HrcA, found in Metamycoplasma arthritidis (strain 158L3-1) (Mycoplasma arthritidis).